The sequence spans 436 residues: Glutamyl-tRNA reductase (436 aa).

Substrate is bound by residues 50 to 53 (TCNR), Ser-110, 115 to 117 (ETQ), and Gln-121. The active-site Nucleophile is Cys-51. 190 to 195 (GLGEMS) is an NADP(+) binding site.

It belongs to the glutamyl-tRNA reductase family. In terms of assembly, homodimer.

The enzyme catalyses (S)-4-amino-5-oxopentanoate + tRNA(Glu) + NADP(+) = L-glutamyl-tRNA(Glu) + NADPH + H(+). It functions in the pathway porphyrin-containing compound metabolism; protoporphyrin-IX biosynthesis; 5-aminolevulinate from L-glutamyl-tRNA(Glu): step 1/2. Catalyzes the NADPH-dependent reduction of glutamyl-tRNA(Glu) to glutamate 1-semialdehyde (GSA). In Wolinella succinogenes (strain ATCC 29543 / DSM 1740 / CCUG 13145 / JCM 31913 / LMG 7466 / NCTC 11488 / FDC 602W) (Vibrio succinogenes), this protein is Glutamyl-tRNA reductase.